A 212-amino-acid polypeptide reads, in one-letter code: Protein Nef (212 aa).

Gly-2 carries the N-myristoyl glycine; by host lipid modification. Ser-6 bears the Phosphoserine; by host mark. Positions 67–71 (EEEEE) are acidic; interacts with host PACS1 and PACS2; stabilizes the interaction of NEF/MHC-I with host AP1M1; necessary for MHC-I internalization. The segment at 75-84 (PVRPQVPLRP) is SH3-binding; interaction with Src family tyrosine kinases. The short motif at 78–81 (PQVP) is the PxxP; stabilizes the interaction of NEF/MHC-I with host AP1M1; necessary for MHC-I internalization element. The tract at residues 114 to 130 (DILDLWMYHTQGILPDW) is mediates dimerization, Nef-PTE1 interaction. The tract at residues 154 to 186 (LSAEEVEEANEGDNNALLHPICQHGADDDHKEV) is binding to ATP6V1H. A Dileucine internalization motif; necessary for CD4 internalization motif is present at residues 170–171 (LL). A Diacidic; necessary for CD4 internalization motif is present at residues 180-181 (DD).

It belongs to the lentivirus primate group Nef protein family. As to quaternary structure, monomer; cytosolic form. Homodimer; membrane bound form. Interacts with Nef associated p21-activated kinase (PAK2); this interaction activates PAK2. Associates with the Nef-MHC-I-AP1 complex; this complex is required for MHC-I internalization. Interacts (via C-terminus) with host PI3-kinase. Interacts with host PACS1; this interaction seems to be weak. Interacts with host PACS2. Interacts with host LCK and MAPK3; these interactions inhibit the kinase activity of the latter. Interacts with host ATP6V1H; this interaction may play a role in CD4 endocytosis. Associates with the CD4-Nef-AP2 complex; this complex is required for CD4 internalization. Interacts with host AP2 subunit alpha and AP2 subunit sigma2. Interacts with TCR-zeta chain; this interaction up-regulates the Fas ligand (FasL) surface expression. Interacts with host HCK, LYN, and SRC; these interactions activate the Src family kinases. Interacts with MAP3K5; this interaction inhibits the Fas and TNFR-mediated death signals. Interacts with beta-COP and PTE1. Interacts with human RACK1; this increases Nef phosphorylation by PKC. Interacts with TP53; this interaction decreases the half-life of TP53, protecting the infected cell against p53-mediated apoptosis. In terms of processing, the virion-associated Nef proteins are cleaved by the viral protease to release the soluble C-terminal core protein. Nef is probably cleaved concomitantly with viral structural proteins on maturation of virus particles. Post-translationally, myristoylated. Phosphorylated on serine residues, probably by host PKCdelta and theta.

Its subcellular location is the host cell membrane. The protein resides in the virion. The protein localises to the secreted. It is found in the host Golgi apparatus membrane. Its function is as follows. Factor of infectivity and pathogenicity, required for optimal virus replication. Alters numerous pathways of T-lymphocyte function and down-regulates immunity surface molecules in order to evade host defense and increase viral infectivity. Alters the functionality of other immunity cells, like dendritic cells, monocytes/macrophages and NK cells. Functionally, in infected CD4(+) T-lymphocytes, down-regulates the surface MHC-I, mature MHC-II, CD4, CD28, CCR5 and CXCR4 molecules. Mediates internalization and degradation of host CD4 through the interaction of with the cytoplasmic tail of CD4, the recruitment of AP-2 (clathrin adapter protein complex 2), internalization through clathrin coated pits, and subsequent transport to endosomes and lysosomes for degradation. Diverts host MHC-I molecules to the trans-Golgi network-associated endosomal compartments by an endocytic pathway to finally target them for degradation. MHC-I down-regulation may involve AP-1 (clathrin adapter protein complex 1) or possibly Src family kinase-ZAP70/Syk-PI3K cascade recruited by PACS2. In consequence infected cells are masked for immune recognition by cytotoxic T-lymphocytes. Decreasing the number of immune receptors also prevents reinfection by more HIV particles (superinfection). Down-regulates host SERINC3 and SERINC5 thereby excluding these proteins from the viral particles. Virion infectivity is drastically higher when SERINC3 or SERINC5 are excluded from the viral envelope, because these host antiviral proteins impair the membrane fusion event necessary for subsequent virion penetration. In terms of biological role, bypasses host T-cell signaling by inducing a transcriptional program nearly identical to that of anti-CD3 cell activation. Interaction with TCR-zeta chain up-regulates the Fas ligand (FasL). Increasing surface FasL molecules and decreasing surface MHC-I molecules on infected CD4(+) cells send attacking cytotoxic CD8+ T-lymphocytes into apoptosis. Plays a role in optimizing the host cell environment for viral replication without causing cell death by apoptosis. Protects the infected cells from apoptosis in order to keep them alive until the next virus generation is ready to strike. Inhibits the Fas and TNFR-mediated death signals by blocking MAP3K5/ASK1. Decreases the half-life of TP53, protecting the infected cell against p53-mediated apoptosis. Inhibits the apoptotic signals regulated by the Bcl-2 family proteins through the formation of a Nef/PI3-kinase/PAK2 complex that leads to activation of PAK2 and induces phosphorylation of host BAD. Its function is as follows. Extracellular Nef protein targets CD4(+) T-lymphocytes for apoptosis by interacting with CXCR4 surface receptors. The sequence is that of Protein Nef from Human immunodeficiency virus type 1 group N (isolate YBF30) (HIV-1).